A 402-amino-acid polypeptide reads, in one-letter code: 1-deoxy-D-xylulose 5-phosphate reductoisomerase (402 aa).

Threonine 21, glycine 22, serine 23, isoleucine 24, glycine 47, asparagine 50, and asparagine 127 together coordinate NADPH. Lysine 128 contacts 1-deoxy-D-xylulose 5-phosphate. Glutamate 129 contacts NADPH. Residue aspartate 151 participates in Mn(2+) binding. 1-deoxy-D-xylulose 5-phosphate-binding residues include serine 152, glutamate 153, serine 177, and histidine 200. Position 153 (glutamate 153) interacts with Mn(2+). Glycine 206 serves as a coordination point for NADPH. Residues serine 213, asparagine 218, lysine 219, and glutamate 222 each contribute to the 1-deoxy-D-xylulose 5-phosphate site. Glutamate 222 is a binding site for Mn(2+).

The protein belongs to the DXR family. Requires Mg(2+) as cofactor. The cofactor is Mn(2+).

The enzyme catalyses 2-C-methyl-D-erythritol 4-phosphate + NADP(+) = 1-deoxy-D-xylulose 5-phosphate + NADPH + H(+). It participates in isoprenoid biosynthesis; isopentenyl diphosphate biosynthesis via DXP pathway; isopentenyl diphosphate from 1-deoxy-D-xylulose 5-phosphate: step 1/6. Its function is as follows. Catalyzes the NADPH-dependent rearrangement and reduction of 1-deoxy-D-xylulose-5-phosphate (DXP) to 2-C-methyl-D-erythritol 4-phosphate (MEP). The protein is 1-deoxy-D-xylulose 5-phosphate reductoisomerase of Mycobacterium marinum (strain ATCC BAA-535 / M).